The chain runs to 368 residues: DNA replication and repair protein RecF (368 aa).

An ATP-binding site is contributed by 30-37; that stretch reads GRNGSGKT.

This sequence belongs to the RecF family.

Its subcellular location is the cytoplasm. Functionally, the RecF protein is involved in DNA metabolism; it is required for DNA replication and normal SOS inducibility. RecF binds preferentially to single-stranded, linear DNA. It also seems to bind ATP. This is DNA replication and repair protein RecF from Chlorobaculum parvum (strain DSM 263 / NCIMB 8327) (Chlorobium vibrioforme subsp. thiosulfatophilum).